Consider the following 215-residue polypeptide: Uracil phosphoribosyltransferase (215 aa).

5-phospho-alpha-D-ribose 1-diphosphate contacts are provided by residues Arg77, Arg102, and 129 to 137 (DPMLATGGS). Residues Ile193 and 198-200 (GDA) contribute to the uracil site. Asp199 lines the 5-phospho-alpha-D-ribose 1-diphosphate pocket.

This sequence belongs to the UPRTase family. Requires Mg(2+) as cofactor.

It carries out the reaction UMP + diphosphate = 5-phospho-alpha-D-ribose 1-diphosphate + uracil. It participates in pyrimidine metabolism; UMP biosynthesis via salvage pathway; UMP from uracil: step 1/1. With respect to regulation, allosterically activated by GTP. Its function is as follows. Catalyzes the conversion of uracil and 5-phospho-alpha-D-ribose 1-diphosphate (PRPP) to UMP and diphosphate. This Corynebacterium urealyticum (strain ATCC 43042 / DSM 7109) protein is Uracil phosphoribosyltransferase.